The primary structure comprises 95 residues: Putative regulatory protein Daud_1598 (95 aa).

This sequence belongs to the RemA family.

The protein is Putative regulatory protein Daud_1598 of Desulforudis audaxviator (strain MP104C).